Consider the following 392-residue polypeptide: Alpha-(1,3)-fucosyltransferase fut-6 (392 aa).

Over 1 to 12 (MSQIGGATCTWR) the chain is Cytoplasmic. A helical; Signal-anchor for type II membrane protein transmembrane segment spans residues 13 to 35 (YLGRFVTLGIYASVALFVWYTLV). The Lumenal segment spans residues 36 to 392 (PTRSKHKDSI…CNNQIASKYL (357 aa)). A glycan (N-linked (GlcNAc...) asparagine) is linked at Asn158.

The protein belongs to the glycosyltransferase 10 family. The cofactor is Unlike other alpha-(1,3)-fucosyltransferases, appears not to require a divalent metal cation as cofactor..

The protein localises to the golgi apparatus. The protein resides in the golgi stack membrane. It functions in the pathway protein modification; protein glycosylation. Inhibited by divalent metal cations. Involved in the fucosylation of N-glycans. Preferentially catalyzes the addition of fucose in alpha 1-3 linkage to the distal GlcNAc residue in N-glycans. Catalyzes the transfer of fucose to Gal-beta-1-4-GlcNAc-alpha-pNP (LN-pNP) and Gal-beta-1-4-GlcNAc-beta-1-3-Gal-beta-1-4-Glc (LNnT). Unlike alpha-(1,3)-fucosyltransferase fut-1, does not transfer fucose to Man-alpha-1-3-(Man-alpha-1-6)-Man-beta-1-4-GlcNAc-beta-1-4-GlcNAc-beta-1-Asn (M3), Man-alpha-1-3-(Man-alpha-1-6)-Man-beta-1-4-GlcNAc-beta-1-4-(Fuc-alpha-1-6)-GlcNAc-beta-1-Asn (M3F6) and GlcNAc-beta-1-2-Man-alpha-1-3-(GlcNAc-beta-1-2-Man-alpha-1-6)-Man-beta-1-4-GlcNAc-beta-1-4(Fuc-alpha-1-6)-GlcNAc-beta-1-Asn (GnM3F6). This is Alpha-(1,3)-fucosyltransferase fut-6 from Caenorhabditis elegans.